Here is a 78-residue protein sequence, read N- to C-terminus: Large ribosomal subunit protein bL28 (78 aa).

This sequence belongs to the bacterial ribosomal protein bL28 family.

This chain is Large ribosomal subunit protein bL28, found in Prochlorococcus marinus (strain MIT 9312).